Reading from the N-terminus, the 485-residue chain is ATP-dependent rRNA helicase RRP3 (485 aa).

The segment covering 1-10 (MPVLKKRKLA) has biased composition (basic residues). The segment at 1–55 (MPVLKKRKLAHTAQPDPIVSDLESSSSEASQQSHDEQLTAANEQDDESPQVQREE) is disordered. A compositionally biased stretch (low complexity) spans 20 to 32 (SDLESSSSEASQQ). Residues 59-87 (KSFKDLGIIDSLCEACEALGYKSPTPIQA) carry the Q motif motif. The Helicase ATP-binding domain occupies 90-261 (IPLALQGRDL…RASLSNPLRV (172 aa)). ATP is bound at residue 103–110 (AETGSGKT). A DEAD box motif is present at residues 209 to 212 (DEAD). One can recognise a Helicase C-terminal domain in the interval 285–433 (YKDIYLVYLL…EYKVEKEEVM (149 aa)). Residues 449–458 (EMKDLHEKRG) are compositionally biased toward basic and acidic residues. The segment at 449–485 (EMKDLHEKRGSRGATLKGRRPAKGAKRGRDEMDREEG) is disordered. The span at 465–474 (KGRRPAKGAK) shows a compositional bias: basic residues. Over residues 475 to 485 (RGRDEMDREEG) the composition is skewed to basic and acidic residues.

This sequence belongs to the DEAD box helicase family. DDX47/RRP3 subfamily. In terms of assembly, interacts with the SSU processome.

Its subcellular location is the nucleus. The catalysed reaction is ATP + H2O = ADP + phosphate + H(+). Its function is as follows. ATP-dependent rRNA helicase required for pre-ribosomal RNA processing. Involved in the maturation of the 35S-pre-rRNA and to its cleavage to mature 18S rRNA. This is ATP-dependent rRNA helicase RRP3 from Ajellomyces capsulatus (strain NAm1 / WU24) (Darling's disease fungus).